Reading from the N-terminus, the 356-residue chain is Trifolitoxin operon protein TfxC (356 aa).

This is Trifolitoxin operon protein TfxC (tfxC) from Rhizobium leguminosarum bv. trifolii.